We begin with the raw amino-acid sequence, 489 residues long: Rhamnulokinase (489 aa).

Alanine 13–arginine 17 contributes to the ATP binding site. Cysteine 68 and cysteine 222 are oxidised to a cystine. Substrate is bound by residues glycine 83 and histidine 236–threonine 238. The Proton acceptor role is filled by aspartate 237. Position 259 (threonine 259) interacts with ATP. Asparagine 296 contributes to the substrate binding site. Position 304 (glutamine 304) interacts with ATP. Cysteine 353 and cysteine 370 are joined by a disulfide. Glycine 402 provides a ligand contact to ATP. Cysteines 413 and 417 form a disulfide.

It belongs to the rhamnulokinase family. Requires Mg(2+) as cofactor.

The enzyme catalyses L-rhamnulose + ATP = L-rhamnulose 1-phosphate + ADP + H(+). The protein operates within carbohydrate degradation; L-rhamnose degradation; glycerone phosphate from L-rhamnose: step 2/3. Functionally, involved in the catabolism of L-rhamnose (6-deoxy-L-mannose). Catalyzes the transfer of the gamma-phosphate group from ATP to the 1-hydroxyl group of L-rhamnulose to yield L-rhamnulose 1-phosphate. The polypeptide is Rhamnulokinase (Salmonella paratyphi A (strain AKU_12601)).